The sequence spans 321 residues: Viral T-cell receptor beta chain-like T17T-22 (321 aa).

A signal peptide spans 1–28 (MISWLPSVAMGSRLLCCVALCLLGAGPA). Residues 29–122 (DSGLTQTPRH…DSALYLCASS (94 aa)) form a v segment region. A glycan (N-linked (GlcNAc...) asparagine; by host) is linked at asparagine 105. The interval 123–128 (PNEDSE) is d segment. The j segment stretch occupies residues 129–144 (YGETLYFGEGSRLTVV). The c region stretch occupies residues 145-321 (EDLKKVSPPK…LMAKVKRKDS (177 aa)). N-linked (GlcNAc...) asparagine; by host glycosylation is found at asparagine 214 and asparagine 264.

This is Viral T-cell receptor beta chain-like T17T-22 (V-TCR) from Feline leukemia virus.